We begin with the raw amino-acid sequence, 157 residues long: Glutamyl-tRNA(Gln) amidotransferase subunit C, mitochondrial (157 aa).

This sequence belongs to the GatC family. As to quaternary structure, subunit of the heterotrimeric GatCAB amidotransferase (AdT) complex, composed of A, B and C subunits.

The protein localises to the mitochondrion. The enzyme catalyses L-glutamyl-tRNA(Gln) + L-glutamine + ATP + H2O = L-glutaminyl-tRNA(Gln) + L-glutamate + ADP + phosphate + H(+). Allows the formation of correctly charged Gln-tRNA(Gln) through the transamidation of misacylated Glu-tRNA(Gln) in the mitochondria. The reaction takes place in the presence of glutamine and ATP through an activated gamma-phospho-Glu-tRNA(Gln). In Drosophila virilis (Fruit fly), this protein is Glutamyl-tRNA(Gln) amidotransferase subunit C, mitochondrial.